The chain runs to 315 residues: Kinetochore protein SPC25 homolog (315 aa).

Met-1 carries the N-acetylmethionine modification. Residues 57 to 91 (TAQSQVELMNLKADLREAEDELVKVLAVKTRKEAR) adopt a coiled-coil conformation. The interval 261-315 (APAISFSTDTNMSTPENKRSKVQVNRRQKRGSESPLLAPVSTSATRRSSRFKGKK) is disordered. Over residues 266–275 (FSTDTNMSTP) the composition is skewed to polar residues. Over residues 280 to 289 (SKVQVNRRQK) the composition is skewed to basic residues.

It belongs to the SPC25 family. In terms of assembly, component of the NDC80 complex, which consists of NDC80, NUF2, SPC24 and SPC25.

It localises to the chromosome. The protein resides in the centromere. Acts as a component of the essential kinetochore-associated NDC80 complex, which is required for chromosome segregation and spindle checkpoint activity to ensure proper cell division. The polypeptide is Kinetochore protein SPC25 homolog (Arabidopsis thaliana (Mouse-ear cress)).